The sequence spans 364 residues: MTLTIAELARALDARLWGDGSLIVNGAAEAGQAGEGQIALATSPAYAEKLSPGGMALLAEGADPEALGLRAAILVGRPRLAMAGLTRAFDPGPGIAPGIHPSAVIDPTAELPEDAAIGPFVVIGPRVRIGAGARIASHVSIGADTVIGRDALIHAGVRIAHGVTIGDRVILNPGVSLGADGFSFVTPEKSGVEEIRQSLGERQEIRQQHWTRIHSLGGLEIDDDVEIGANSTVDRGTIRATRIGRGTKIDNLVQVGHNCVVGEDCLLCGLVGVAGSARIGNRVVLGGQVGVSDNIFVGDDVIAGGATKIFTNAPAGRVLLGSPAVRMETHVEAQKNIRRLPRLYAQVAELRETVKKLLDKGDVE.

H257 functions as the Proton acceptor in the catalytic mechanism.

Belongs to the transferase hexapeptide repeat family. LpxD subfamily. As to quaternary structure, homotrimer.

It carries out the reaction a UDP-3-O-[(3R)-3-hydroxyacyl]-alpha-D-glucosamine + a (3R)-hydroxyacyl-[ACP] = a UDP-2-N,3-O-bis[(3R)-3-hydroxyacyl]-alpha-D-glucosamine + holo-[ACP] + H(+). It functions in the pathway bacterial outer membrane biogenesis; LPS lipid A biosynthesis. In terms of biological role, catalyzes the N-acylation of UDP-3-O-acylglucosamine using 3-hydroxyacyl-ACP as the acyl donor. Is involved in the biosynthesis of lipid A, a phosphorylated glycolipid that anchors the lipopolysaccharide to the outer membrane of the cell. In Paracoccus denitrificans (strain Pd 1222), this protein is UDP-3-O-acylglucosamine N-acyltransferase.